Consider the following 525-residue polypeptide: GMP synthase [glutamine-hydrolyzing] (525 aa).

A Glutamine amidotransferase type-1 domain is found at 8–207 (KILILDFGSQ…ALEICGCPAN (200 aa)). Catalysis depends on cysteine 85, which acts as the Nucleophile. Residues histidine 181 and glutamate 183 contribute to the active site. In terms of domain architecture, GMPS ATP-PPase spans 208–400 (WKPSSIIEDA…LGLPYDMLYR (193 aa)). Position 235–241 (235–241 (SGGVDSS)) interacts with ATP.

Homodimer.

The enzyme catalyses XMP + L-glutamine + ATP + H2O = GMP + L-glutamate + AMP + diphosphate + 2 H(+). The protein operates within purine metabolism; GMP biosynthesis; GMP from XMP (L-Gln route): step 1/1. In terms of biological role, catalyzes the synthesis of GMP from XMP. This is GMP synthase [glutamine-hydrolyzing] from Shewanella pealeana (strain ATCC 700345 / ANG-SQ1).